A 333-amino-acid chain; its full sequence is uncharacterized protein (333 aa).

The protein to bacterial alkanal monooxygenase alpha and beta chains.

This is an uncharacterized protein from Bacillus subtilis (strain 168).